We begin with the raw amino-acid sequence, 133 residues long: Secreted effector protein SteB (133 aa).

The protein localises to the secreted. It localises to the host cytoplasm. Effector proteins function to alter host cell physiology and promote bacterial survival in host tissues. The chain is Secreted effector protein SteB (steB) from Salmonella typhimurium (strain 14028s / SGSC 2262).